The following is a 119-amino-acid chain: Methylglyoxal synthase (119 aa).

Residues 1–119 (MKIALIAHDK…ESAKLIMADI (119 aa)) form the MGS-like domain. Substrate contacts are provided by residues His-8, Lys-12, 34 to 37 (TGTT), and 54 to 55 (SG). Asp-60 (proton donor/acceptor) is an active-site residue. His-87 contacts substrate.

The protein belongs to the methylglyoxal synthase family.

It catalyses the reaction dihydroxyacetone phosphate = methylglyoxal + phosphate. Functionally, catalyzes the formation of methylglyoxal from dihydroxyacetone phosphate. The sequence is that of Methylglyoxal synthase from Clostridium perfringens (strain ATCC 13124 / DSM 756 / JCM 1290 / NCIMB 6125 / NCTC 8237 / Type A).